The chain runs to 212 residues: Maleylpyruvate isomerase (212 aa).

One can recognise a GST N-terminal domain in the interval 1–80 (MKLYNFWRSG…WLEEQYPTPA (80 aa)). Glutathione is bound by residues 9-11 (SGT), His38, Val52, 64-65 (QS), 102-104 (DIH), 108-110 (NRR), and Arg176. In terms of domain architecture, GST C-terminal spans 85–212 (DADGRQRVRA…AAPAAQPDSA (128 aa)).

This sequence belongs to the GST superfamily. Zeta family. Homodimer. It depends on glutathione as a cofactor.

It catalyses the reaction 3-maleylpyruvate = 3-fumarylpyruvate. It functions in the pathway aromatic compound metabolism; naphthalene degradation. Its function is as follows. Catalyzes the GSH-dependent isomerization of maleylpyruvate to fumarylpyruvate which is subsequently processed by NagK to form pyruvate and fumarate. The sequence is that of Maleylpyruvate isomerase from Ralstonia sp.